We begin with the raw amino-acid sequence, 750 residues long: Sulfhydryl oxidase 1 (750 aa).

The N-terminal stretch at 1 to 32 (MRRCGRHSGPPSLLLLLLLLPPLLLSVPGAYA) is a signal peptide. Residues 33 to 159 (ARLSVLYSSS…RMRLIDALES (127 aa)) enclose the Thioredoxin domain. Catalysis depends on nucleophile residues Cys73 and Cys76. Disulfide bonds link Cys73–Cys76 and Cys104–Cys113. 2 N-linked (GlcNAc...) asparagine glycosylation sites follow: Asn133 and Asn246. Cys396 and Cys408 are oxidised to a cystine. An ERV/ALR sulfhydryl oxidase domain is found at 399 to 506 (SEPHFRGFPC…EDPQFPKVQW (108 aa)). Residues Arg404, Trp411, His415, Asp454, His458, 481–488 (WTSHNRVN), Lys503, and Trp506 each bind FAD. Cys452 and Cys455 form a disulfide bridge. A disulfide bridge links Cys512 with Cys515. 2 disordered regions span residues 545 to 567 (VRDP…ASPN) and 585 to 632 (EQAA…PEHT). Low complexity predominate over residues 587 to 597 (AASAASPGATA). A helical transmembrane segment spans residues 710–730 (FLDISLCVGLYSVSFMGLLAM).

It belongs to the quiescin-sulfhydryl oxidase (QSOX) family. Monomer. FAD is required as a cofactor. N-glycosylated. O-glycosylated on Thr and Ser residues. Isoform 3: Detected in seminal vesicle fluid (at protein level). Isoform 1: Detected in brain, hypophysis, heart, testis and the seminal vesicle. Isoform 3: Highly expressed in the seminal vesicles followed by testis, heart, brain, thymus, hypophysis and lung. Also expressed in prostate, kidney, spleen, liver.

It is found in the golgi apparatus membrane. The protein localises to the secreted. It catalyses the reaction 2 R'C(R)SH + O2 = R'C(R)S-S(R)CR' + H2O2. In terms of biological role, catalyzes the oxidation of sulfhydryl groups in peptide and protein thiols to disulfides with the reduction of oxygen to hydrogen peroxide. Plays a role in disulfide bond formation in a variety of extracellular proteins. In fibroblasts, required for normal incorporation of laminin into the extracellular matrix, and thereby for normal cell-cell adhesion and cell migration. The protein is Sulfhydryl oxidase 1 (Qsox1) of Rattus norvegicus (Rat).